A 271-amino-acid chain; its full sequence is Bifunctional protein FolD (271 aa).

NADP(+)-binding positions include 154-156 (GRS), T181, and I222.

This sequence belongs to the tetrahydrofolate dehydrogenase/cyclohydrolase family. As to quaternary structure, homodimer.

It carries out the reaction (6R)-5,10-methylene-5,6,7,8-tetrahydrofolate + NADP(+) = (6R)-5,10-methenyltetrahydrofolate + NADPH. It catalyses the reaction (6R)-5,10-methenyltetrahydrofolate + H2O = (6R)-10-formyltetrahydrofolate + H(+). The protein operates within one-carbon metabolism; tetrahydrofolate interconversion. In terms of biological role, catalyzes the oxidation of 5,10-methylenetetrahydrofolate to 5,10-methenyltetrahydrofolate and then the hydrolysis of 5,10-methenyltetrahydrofolate to 10-formyltetrahydrofolate. This is Bifunctional protein FolD from Thermosipho melanesiensis (strain DSM 12029 / CIP 104789 / BI429).